Here is a 94-residue protein sequence, read N- to C-terminus: MKTLLLTLVVVTIMCLDLGYTTKCYKTGERIISETCPPGQDLCYMKTWCDVFCGSRGRVVELGCTATCPTVKPHEQITCCSTDNCNPHPKMKQR.

Residues 1 to 21 form the signal peptide; that stretch reads MKTLLLTLVVVTIMCLDLGYT. 5 cysteine pairs are disulfide-bonded: C24–C43, C36–C64, C49–C53, C68–C79, and C80–C85.

The protein belongs to the three-finger toxin family. Long-chain subfamily. Type II alpha-neurotoxin sub-subfamily. As to expression, expressed by the venom gland.

The protein localises to the secreted. Functionally, binds with high affinity to muscular (alpha-1/CHRNA1) and neuronal (alpha-7/CHRNA7) nicotinic acetylcholine receptor (nAChR) and inhibits acetylcholine from binding to the receptor, thereby impairing neuromuscular and neuronal transmission. This chain is Long neurotoxin LNTX8, found in Ophiophagus hannah (King cobra).